The chain runs to 319 residues: Major intracellular serine protease (319 aa).

A propeptide spanning residues 1–17 (MNGEIRLIPYVTNEQIM) is cleaved from the precursor. The Peptidase S8 domain occupies 23–307 (PEGIKVIKAP…FLYLTAPDEL (285 aa)). Active-site charge relay system residues include aspartate 50, histidine 87, and serine 246.

The protein belongs to the peptidase S8 family. As to quaternary structure, homodimer.

It localises to the cytoplasm. Its function is as follows. Major intracellular protease produced by Bacillus subtilis. The polypeptide is Major intracellular serine protease (isp) (Bacillus subtilis (strain 168)).